The primary structure comprises 321 residues: GTP 3',8-cyclase (321 aa).

The 229-residue stretch at S5–E233 folds into the Radical SAM core domain. Position 14 (R14) interacts with GTP. [4Fe-4S] cluster contacts are provided by C21 and C25. Y27 serves as a coordination point for S-adenosyl-L-methionine. A [4Fe-4S] cluster-binding site is contributed by C28. R64 serves as a coordination point for GTP. S-adenosyl-L-methionine is bound at residue G68. A GTP-binding site is contributed by S95. S119 provides a ligand contact to S-adenosyl-L-methionine. K155 contacts GTP. M189 is a binding site for S-adenosyl-L-methionine. Residues C249 and C252 each coordinate [4Fe-4S] cluster. GTP is bound at residue R254–R256. C266 contributes to the [4Fe-4S] cluster binding site.

This sequence belongs to the radical SAM superfamily. MoaA family. As to quaternary structure, monomer and homodimer. [4Fe-4S] cluster serves as cofactor.

It catalyses the reaction GTP + AH2 + S-adenosyl-L-methionine = (8S)-3',8-cyclo-7,8-dihydroguanosine 5'-triphosphate + 5'-deoxyadenosine + L-methionine + A + H(+). Its pathway is cofactor biosynthesis; molybdopterin biosynthesis. Its function is as follows. Catalyzes the cyclization of GTP to (8S)-3',8-cyclo-7,8-dihydroguanosine 5'-triphosphate. This chain is GTP 3',8-cyclase, found in Helicobacter pylori (strain J99 / ATCC 700824) (Campylobacter pylori J99).